We begin with the raw amino-acid sequence, 144 residues long: uncharacterized protein (144 aa).

Residues 24–67 are a coiled coil; sequence KLKELYQRLNQGINVEEVLKETVEDYKEKMEKYILEVLEEIEKY.

This is an uncharacterized protein from Aquifex aeolicus (strain VF5).